The chain runs to 101 residues: Urease subunit beta (101 aa).

Belongs to the urease beta subunit family. As to quaternary structure, heterotrimer of UreA (gamma), UreB (beta) and UreC (alpha) subunits. Three heterotrimers associate to form the active enzyme.

The protein localises to the cytoplasm. The catalysed reaction is urea + 2 H2O + H(+) = hydrogencarbonate + 2 NH4(+). It functions in the pathway nitrogen metabolism; urea degradation; CO(2) and NH(3) from urea (urease route): step 1/1. The polypeptide is Urease subunit beta (Rhizobium etli (strain CIAT 652)).